A 345-amino-acid chain; its full sequence is Arginine-hydroxylase NDUFAF5, mitochondrial (345 aa).

Residues 1–36 constitute a mitochondrion transit peptide; the sequence is MLRPAGLWRLCRRPWAARVPAENLGRREVTSGVSPR.

This sequence belongs to the methyltransferase superfamily. In terms of assembly, interacts with NDUFAF8, leading to stabilize NDUFAF5. Interacts with NDUFS7. Interacts with PYURF (via TRM112 domain); the interaction is direct and stabilizes NDUFAF5 protein.

The protein localises to the mitochondrion inner membrane. In terms of biological role, arginine hydroxylase that mediates hydroxylation of 'Arg-111' of NDUFS7 and is involved in the assembly of mitochondrial NADH:ubiquinone oxidoreductase complex (complex I, MT-ND1) at early stages. May also have methyltransferase activity. The protein is Arginine-hydroxylase NDUFAF5, mitochondrial of Homo sapiens (Human).